We begin with the raw amino-acid sequence, 103 residues long: Small ribosomal subunit protein uS10 (103 aa).

It belongs to the universal ribosomal protein uS10 family. In terms of assembly, part of the 30S ribosomal subunit.

Functionally, involved in the binding of tRNA to the ribosomes. This chain is Small ribosomal subunit protein uS10, found in Acidovorax sp. (strain JS42).